A 312-amino-acid chain; its full sequence is 4-diphosphocytidyl-2-C-methyl-D-erythritol kinase (312 aa).

K10 is a catalytic residue. P105–A115 provides a ligand contact to ATP. The active site involves D146.

Belongs to the GHMP kinase family. IspE subfamily.

It catalyses the reaction 4-CDP-2-C-methyl-D-erythritol + ATP = 4-CDP-2-C-methyl-D-erythritol 2-phosphate + ADP + H(+). It participates in isoprenoid biosynthesis; isopentenyl diphosphate biosynthesis via DXP pathway; isopentenyl diphosphate from 1-deoxy-D-xylulose 5-phosphate: step 3/6. In terms of biological role, catalyzes the phosphorylation of the position 2 hydroxy group of 4-diphosphocytidyl-2C-methyl-D-erythritol. The chain is 4-diphosphocytidyl-2-C-methyl-D-erythritol kinase from Corynebacterium glutamicum (strain R).